A 577-amino-acid polypeptide reads, in one-letter code: Proline--tRNA ligase (577 aa).

Belongs to the class-II aminoacyl-tRNA synthetase family. ProS type 1 subfamily. In terms of assembly, homodimer.

It localises to the cytoplasm. It catalyses the reaction tRNA(Pro) + L-proline + ATP = L-prolyl-tRNA(Pro) + AMP + diphosphate. In terms of biological role, catalyzes the attachment of proline to tRNA(Pro) in a two-step reaction: proline is first activated by ATP to form Pro-AMP and then transferred to the acceptor end of tRNA(Pro). As ProRS can inadvertently accommodate and process non-cognate amino acids such as alanine and cysteine, to avoid such errors it has two additional distinct editing activities against alanine. One activity is designated as 'pretransfer' editing and involves the tRNA(Pro)-independent hydrolysis of activated Ala-AMP. The other activity is designated 'posttransfer' editing and involves deacylation of mischarged Ala-tRNA(Pro). The misacylated Cys-tRNA(Pro) is not edited by ProRS. This is Proline--tRNA ligase from Thermotoga maritima (strain ATCC 43589 / DSM 3109 / JCM 10099 / NBRC 100826 / MSB8).